The following is a 111-amino-acid chain: Universal stress protein B (111 aa).

2 helical membrane-spanning segments follow: residues Met1–Arg21 and Phe90–Trp110.

This sequence belongs to the universal stress protein B family.

It is found in the cell inner membrane. The polypeptide is Universal stress protein B (Edwardsiella ictaluri (strain 93-146)).